Consider the following 516-residue polypeptide: Bifunctional purine biosynthesis protein PurH (516 aa).

The MGS-like domain occupies 1-150; sequence MSDDRKQIKR…KNHPSVAVVV (150 aa).

Belongs to the PurH family.

The catalysed reaction is (6R)-10-formyltetrahydrofolate + 5-amino-1-(5-phospho-beta-D-ribosyl)imidazole-4-carboxamide = 5-formamido-1-(5-phospho-D-ribosyl)imidazole-4-carboxamide + (6S)-5,6,7,8-tetrahydrofolate. The enzyme catalyses IMP + H2O = 5-formamido-1-(5-phospho-D-ribosyl)imidazole-4-carboxamide. It functions in the pathway purine metabolism; IMP biosynthesis via de novo pathway; 5-formamido-1-(5-phospho-D-ribosyl)imidazole-4-carboxamide from 5-amino-1-(5-phospho-D-ribosyl)imidazole-4-carboxamide (10-formyl THF route): step 1/1. It participates in purine metabolism; IMP biosynthesis via de novo pathway; IMP from 5-formamido-1-(5-phospho-D-ribosyl)imidazole-4-carboxamide: step 1/1. This Corynebacterium ammoniagenes (Brevibacterium ammoniagenes) protein is Bifunctional purine biosynthesis protein PurH.